The chain runs to 115 residues: Large ribosomal subunit protein bL20c (115 aa).

This sequence belongs to the bacterial ribosomal protein bL20 family.

The protein localises to the plastid. It is found in the chloroplast. In terms of biological role, binds directly to 23S ribosomal RNA and is necessary for the in vitro assembly process of the 50S ribosomal subunit. It is not involved in the protein synthesizing functions of that subunit. The chain is Large ribosomal subunit protein bL20c (rpl20) from Cyanidium caldarium (Red alga).